The sequence spans 613 residues: Probable potassium transport system protein Kup (613 aa).

11 helical membrane passes run V38–L58, W91–T111, P128–F148, F159–I179, F206–M226, W238–L258, A270–I290, I328–F348, A357–A377, G387–V407, and L410–T430.

The protein belongs to the HAK/KUP transporter (TC 2.A.72) family.

It is found in the cell inner membrane. The enzyme catalyses K(+)(in) + H(+)(in) = K(+)(out) + H(+)(out). Functionally, transport of potassium into the cell. Likely operates as a K(+):H(+) symporter. The sequence is that of Probable potassium transport system protein Kup from Chlorobaculum tepidum (strain ATCC 49652 / DSM 12025 / NBRC 103806 / TLS) (Chlorobium tepidum).